The primary structure comprises 156 residues: Ribosomal RNA large subunit methyltransferase H (156 aa).

S-adenosyl-L-methionine contacts are provided by residues Leu73, Gly104, and 123–128 (LSALTM).

Belongs to the RNA methyltransferase RlmH family. Homodimer.

The protein localises to the cytoplasm. The enzyme catalyses pseudouridine(1915) in 23S rRNA + S-adenosyl-L-methionine = N(3)-methylpseudouridine(1915) in 23S rRNA + S-adenosyl-L-homocysteine + H(+). Its function is as follows. Specifically methylates the pseudouridine at position 1915 (m3Psi1915) in 23S rRNA. The chain is Ribosomal RNA large subunit methyltransferase H from Tolumonas auensis (strain DSM 9187 / NBRC 110442 / TA 4).